Consider the following 381-residue polypeptide: Anhydro-N-acetylmuramic acid kinase (381 aa).

22–29 is a binding site for ATP; sequence GTSIDGID.

This sequence belongs to the anhydro-N-acetylmuramic acid kinase family.

The enzyme catalyses 1,6-anhydro-N-acetyl-beta-muramate + ATP + H2O = N-acetyl-D-muramate 6-phosphate + ADP + H(+). It functions in the pathway amino-sugar metabolism; 1,6-anhydro-N-acetylmuramate degradation. The protein operates within cell wall biogenesis; peptidoglycan recycling. In terms of biological role, catalyzes the specific phosphorylation of 1,6-anhydro-N-acetylmuramic acid (anhMurNAc) with the simultaneous cleavage of the 1,6-anhydro ring, generating MurNAc-6-P. Is required for the utilization of anhMurNAc either imported from the medium or derived from its own cell wall murein, and thus plays a role in cell wall recycling. In Xylella fastidiosa (strain Temecula1 / ATCC 700964), this protein is Anhydro-N-acetylmuramic acid kinase.